A 290-amino-acid polypeptide reads, in one-letter code: ATP synthase gamma chain (290 aa).

It belongs to the ATPase gamma chain family. In terms of assembly, F-type ATPases have 2 components, CF(1) - the catalytic core - and CF(0) - the membrane proton channel. CF(1) has five subunits: alpha(3), beta(3), gamma(1), delta(1), epsilon(1). CF(0) has three main subunits: a, b and c.

The protein resides in the cell membrane. Its function is as follows. Produces ATP from ADP in the presence of a proton gradient across the membrane. The gamma chain is believed to be important in regulating ATPase activity and the flow of protons through the CF(0) complex. This is ATP synthase gamma chain from Buchnera aphidicola subsp. Acyrthosiphon pisum (strain 5A).